Here is a 213-residue protein sequence, read N- to C-terminus: Probable nicotinate-nucleotide adenylyltransferase (213 aa).

The segment at 194–213 is disordered; that stretch reads RKPNNGEAKDGDVKDEEAVR. A compositionally biased stretch (basic and acidic residues) spans 200 to 213; sequence EAKDGDVKDEEAVR.

The protein belongs to the NadD family.

The catalysed reaction is nicotinate beta-D-ribonucleotide + ATP + H(+) = deamido-NAD(+) + diphosphate. It participates in cofactor biosynthesis; NAD(+) biosynthesis; deamido-NAD(+) from nicotinate D-ribonucleotide: step 1/1. Functionally, catalyzes the reversible adenylation of nicotinate mononucleotide (NaMN) to nicotinic acid adenine dinucleotide (NaAD). The protein is Probable nicotinate-nucleotide adenylyltransferase of Mycolicibacterium smegmatis (strain ATCC 700084 / mc(2)155) (Mycobacterium smegmatis).